We begin with the raw amino-acid sequence, 337 residues long: Nucleoid-associated protein Avin_11450 (337 aa).

It belongs to the YejK family.

It localises to the cytoplasm. The protein localises to the nucleoid. The sequence is that of Nucleoid-associated protein Avin_11450 from Azotobacter vinelandii (strain DJ / ATCC BAA-1303).